The following is a 273-amino-acid chain: Galactose-binding lectin (273 aa).

An N-terminal signal peptide occupies residues 1-23 (MKPFCVFLTFFLLLAASSKKVDS). Residues glutamate 144 and aspartate 146 each contribute to the Mn(2+) site. Positions 146, 148, 150, and 155 each coordinate Ca(2+). Residues aspartate 155 and histidine 160 each contribute to the Mn(2+) site.

The protein belongs to the leguminous lectin family. In terms of assembly, homotetramer.

In terms of biological role, D-galactose specific lectin. The protein is Galactose-binding lectin of Arachis hypogaea (Peanut).